Here is a 188-residue protein sequence, read N- to C-terminus: Elongation factor P (188 aa).

This sequence belongs to the elongation factor P family.

The protein localises to the cytoplasm. Its pathway is protein biosynthesis; polypeptide chain elongation. Functionally, involved in peptide bond synthesis. Stimulates efficient translation and peptide-bond synthesis on native or reconstituted 70S ribosomes in vitro. Probably functions indirectly by altering the affinity of the ribosome for aminoacyl-tRNA, thus increasing their reactivity as acceptors for peptidyl transferase. This Rhodopseudomonas palustris (strain ATCC BAA-98 / CGA009) protein is Elongation factor P.